The sequence spans 482 residues: Zinc finger protein 385B (482 aa).

The segment at 1 to 105 is required for induction of apoptosis; that stretch reads MNMATFLRGF…TGSACHTTTL (105 aa). 2 consecutive Matrin-type zinc fingers follow at residues 34–64 and 169–199; these read SFCE…RVKQ and ISCN…KVKA. Disordered regions lie at residues 54–75, 189–259, and 268–287; these read DGKS…PPVQ, KGSK…SFLL, and LGAI…SVAE. An interaction with p53/TP53 region spans residues 106 to 482; the sequence is PALVRTPTLM…TPASILFAPY (377 aa). The segment covering 231–240 has biased composition (basic and acidic residues); sequence SSDKSEDKGK. A Matrin-type 3 zinc finger spans residues 294–328; sequence KKLLYCSLCKVAVNSLSQLEAHNTGSKHKTMVEAR. Disordered regions lie at residues 331 to 352 and 378 to 397; these read AGPI…GSKG and HISS…KPKY. The Matrin-type 4 zinc finger occupies 360–390; sequence FHCEICDVHVNSEIQLKQHISSRRHKDRVAG.

In terms of assembly, interacts with p53/TP53; the interaction is direct.

The protein resides in the nucleus. In terms of biological role, may play a role in p53/TP53-mediated apoptosis. The protein is Zinc finger protein 385B (Znf385b) of Mus musculus (Mouse).